We begin with the raw amino-acid sequence, 595 residues long: D-xylonate dehydratase (595 aa).

Cys-64 contacts [2Fe-2S] cluster. Glu-96 is a Mg(2+) binding site. Cys-132 serves as a coordination point for [2Fe-2S] cluster. Mg(2+) is bound at residue Asp-133. [2Fe-2S] cluster is bound at residue Cys-205. Glu-467 serves as a coordination point for Mg(2+).

The protein belongs to the IlvD/Edd family. Homotetramer. It depends on [2Fe-2S] cluster as a cofactor. Mg(2+) is required as a cofactor.

The catalysed reaction is D-xylonate = 2-dehydro-3-deoxy-D-arabinonate + H2O. The enzyme catalyses D-gluconate = 2-dehydro-3-deoxy-D-gluconate + H2O. It participates in carbohydrate metabolism; D-xylose degradation. Its function is as follows. Catalyzes the dehydration of D-xylonate to 2-dehydro-3-deoxy-D-arabinonate during D-xylose degradation. Can also dehydrate D-gluconate, with similar catalytic efficiency. Has weak activity with D-galactonate, D-fuconate and L-arabinonate. This chain is D-xylonate dehydratase, found in Caulobacter vibrioides (strain ATCC 19089 / CIP 103742 / CB 15) (Caulobacter crescentus).